Here is a 587-residue protein sequence, read N- to C-terminus: Proteasome-associated ATPase (587 aa).

The stretch at 9 to 94 forms a coiled coil; that stretch reads ARKAQHDAEI…KEEVDRLAQP (86 aa). 276–281 contributes to the ATP binding site; that stretch reads GCGKTL. A docks into pockets in the proteasome alpha-ring region spans residues 586 to 587; that stretch reads YL.

Belongs to the AAA ATPase family. In terms of assembly, homohexamer. Assembles into a hexameric ring structure that caps the 20S proteasome core. Strongly interacts with the prokaryotic ubiquitin-like protein Pup through a hydrophobic interface; the interacting region of ARC lies in its N-terminal coiled-coil domain. There is one Pup binding site per ARC hexamer ring. Upon ATP-binding, the C-terminus of ARC interacts with the alpha-rings of the proteasome core, possibly by binding to the intersubunit pockets.

The protein operates within protein degradation; proteasomal Pup-dependent pathway. In terms of biological role, ATPase which is responsible for recognizing, binding, unfolding and translocation of pupylated proteins into the bacterial 20S proteasome core particle. May be essential for opening the gate of the 20S proteasome via an interaction with its C-terminus, thereby allowing substrate entry and access to the site of proteolysis. Thus, the C-termini of the proteasomal ATPase may function like a 'key in a lock' to induce gate opening and therefore regulate proteolysis. The protein is Proteasome-associated ATPase of Thermomonospora curvata (strain ATCC 19995 / DSM 43183 / JCM 3096 / KCTC 9072 / NBRC 15933 / NCIMB 10081 / Henssen B9).